The sequence spans 249 residues: Triosephosphate isomerase (249 aa).

Substrate-binding residues include Asn12 and Lys14. Lys14 carries the post-translational modification N6-acetyllysine. Ser21 carries the post-translational modification Phosphoserine. Tyr68 is modified (3'-nitrotyrosine). Ser80 is subject to Phosphoserine. Residue His96 is the Electrophile of the active site. Ser106 carries the post-translational modification Phosphoserine. Lys142 is covalently cross-linked (Glycyl lysine isopeptide (Lys-Gly) (interchain with G-Cter in SUMO1)). At Lys149 the chain carries N6-succinyllysine. Lys156 carries the N6-acetyllysine; alternate modification. An N6-succinyllysine; alternate modification is found at Lys156. Ser159 is subject to Phosphoserine. Glu166 serves as the catalytic Proton acceptor. Residue Thr173 is modified to Phosphothreonine. Lys194 bears the N6-acetyllysine; alternate mark. Lys194 carries the N6-succinyllysine; alternate modification. The residue at position 194 (Lys194) is an N6-methyllysine; alternate. The residue at position 198 (Ser198) is a Phosphoserine. 3'-nitrotyrosine is present on Tyr209. At Ser212 the chain carries Phosphoserine. Phosphothreonine is present on Thr214. Ser223 bears the Phosphoserine mark. At Lys238 the chain carries N6-acetyllysine.

Belongs to the triosephosphate isomerase family. In terms of assembly, homodimer.

The protein localises to the cytoplasm. It catalyses the reaction D-glyceraldehyde 3-phosphate = dihydroxyacetone phosphate. The enzyme catalyses dihydroxyacetone phosphate = methylglyoxal + phosphate. It participates in carbohydrate degradation; glycolysis; D-glyceraldehyde 3-phosphate from glycerone phosphate: step 1/1. Its pathway is carbohydrate biosynthesis; gluconeogenesis. Its function is as follows. Triosephosphate isomerase is an extremely efficient metabolic enzyme that catalyzes the interconversion between dihydroxyacetone phosphate (DHAP) and D-glyceraldehyde-3-phosphate (G3P) in glycolysis and gluconeogenesis. In terms of biological role, it is also responsible for the non-negligible production of methylglyoxal a reactive cytotoxic side-product that modifies and can alter proteins, DNA and lipids. The polypeptide is Triosephosphate isomerase (TPI1) (Homo sapiens (Human)).